A 198-amino-acid polypeptide reads, in one-letter code: V-type proton ATPase subunit E (198 aa).

This sequence belongs to the V-ATPase E subunit family.

Its function is as follows. Produces ATP from ADP in the presence of a proton gradient across the membrane. This is V-type proton ATPase subunit E from Borrelia recurrentis (strain A1).